The following is a 226-amino-acid chain: Calcium-binding protein 1 (226 aa).

A lipid anchor (N-myristoyl glycine) is attached at G2. C4 carries S-palmitoyl cysteine lipidation. 4 consecutive EF-hand domains span residues 81–116, 135–152, 158–193, and 195–226; these read EEIE…MGYM, GHVD…KLLA, IGVK…LLGH, and VGHR…MMSR. Ca(2+) contacts are provided by D94, D96, D98, Y100, and D105. D171, N173, D175, and E177 together coordinate Ca(2+). S179 carries the phosphoserine modification. Positions 182, 208, 210, 212, 214, and 219 each coordinate Ca(2+).

As to quaternary structure, homodimer. Interacts (via C-terminus) with ITPR1, ITPR2 and ITPR3. This binding is calcium dependent and the interaction correlates with calcium concentration. An additional calcium-independent interaction with the N-terminus of ITPR1 results in a decreased InsP(3) binding to the receptor. Interacts with CACNA1A (via C-terminal CDB motif) in the pre- and postsynaptic membranes. Interacts with CACNA1C (via C-terminal C and IQ motifs). Interacts with CACNA1D. The binding to the C motif is calcium independent whereas the binding to IQ requires the presence of calcium and is mutually exclusive with calmodulin binding. Interacts with TRPC5 (via C-terminus). Interacts (via EF-hands 1 and 2) at microtubules with MAP1LC3B. Interacts with MYO1C. Interacts (via EF-hands 1 and 2) with NSMF (via the central NLS-containing motif region), the interaction occurs in a calcium dependent manner after synaptic NMDA receptor stimulation and prevents nuclear import of NSMF. Interacts with SPACA9. Post-translationally, phosphorylated. The phosphorylation regulates the activity.

It is found in the cytoplasm. Its subcellular location is the cytoskeleton. It localises to the perinuclear region. The protein resides in the cell membrane. The protein localises to the golgi apparatus. It is found in the postsynaptic density. Modulates calcium-dependent activity of inositol 1,4,5-triphosphate receptors (ITPRs). Inhibits agonist-induced intracellular calcium signaling. Enhances inactivation and does not support calcium-dependent facilitation of voltage-dependent P/Q-type calcium channels. Causes calcium-dependent facilitation and inhibits inactivation of L-type calcium channels by binding to the same sites as calmodulin in the C-terminal domain of CACNA1C, but has an opposite effect on channel function. Suppresses the calcium-dependent inactivation of CACNA1D. Inhibits TRPC5 channels. Prevents NMDA receptor-induced cellular degeneration. Required for the normal transfer of light signals through the retina. In Bos taurus (Bovine), this protein is Calcium-binding protein 1 (CABP1).